Consider the following 273-residue polypeptide: Bis(5'-nucleosyl)-tetraphosphatase, symmetrical (273 aa).

Belongs to the Ap4A hydrolase family.

The enzyme catalyses P(1),P(4)-bis(5'-adenosyl) tetraphosphate + H2O = 2 ADP + 2 H(+). In terms of biological role, hydrolyzes diadenosine 5',5'''-P1,P4-tetraphosphate to yield ADP. The sequence is that of Bis(5'-nucleosyl)-tetraphosphatase, symmetrical from Proteus mirabilis (strain HI4320).